The chain runs to 491 residues: Glutamyl-tRNA(Gln) amidotransferase subunit A (491 aa).

Catalysis depends on charge relay system residues K78 and S158. Catalysis depends on S182, which acts as the Acyl-ester intermediate.

Belongs to the amidase family. GatA subfamily. In terms of assembly, heterotrimer of A, B and C subunits.

It catalyses the reaction L-glutamyl-tRNA(Gln) + L-glutamine + ATP + H2O = L-glutaminyl-tRNA(Gln) + L-glutamate + ADP + phosphate + H(+). In terms of biological role, allows the formation of correctly charged Gln-tRNA(Gln) through the transamidation of misacylated Glu-tRNA(Gln) in organisms which lack glutaminyl-tRNA synthetase. The reaction takes place in the presence of glutamine and ATP through an activated gamma-phospho-Glu-tRNA(Gln). The chain is Glutamyl-tRNA(Gln) amidotransferase subunit A from Bradyrhizobium sp. (strain BTAi1 / ATCC BAA-1182).